The chain runs to 293 residues: Rhomboid-like protease 1 (293 aa).

Residues 18 to 40 (EHTPLYNAETGSRDSDSTSSGGA) form a disordered region. The next 6 membrane-spanning stretches (helical) occupy residues 62–82 (VVLA…CLDT), 112–132 (LLLP…VFFQ), 148–168 (FTGL…TAFF), 174–194 (VGAS…MALT), 217–237 (LLMF…GGLL), and 262–282 (AAAI…LYAV). Serine 177 serves as the catalytic Nucleophile. Residue histidine 232 is part of the active site.

Belongs to the peptidase S54 family.

It localises to the cytoplasmic vesicle. The protein resides in the secretory vesicle. It is found in the microneme membrane. It catalyses the reaction Cleaves type-1 transmembrane domains using a catalytic dyad composed of serine and histidine that are contributed by different transmembrane domains.. Serine protease involved in intramembrane proteolysis and the subsequent release of polypeptides from their membrane anchors. Has no detectable activity towards MIC2. This chain is Rhomboid-like protease 1 (ROM1), found in Toxoplasma gondii.